A 334-amino-acid polypeptide reads, in one-letter code: GTP 3',8-cyclase (334 aa).

Residues 13–239 (RFHRKFYYLR…KVKAVNDGPA (227 aa)) enclose the Radical SAM core domain. R22 lines the GTP pocket. Positions 29 and 33 each coordinate [4Fe-4S] cluster. An S-adenosyl-L-methionine-binding site is contributed by Y35. C36 contributes to the [4Fe-4S] cluster binding site. R73 contributes to the GTP binding site. G77 is an S-adenosyl-L-methionine binding site. Position 104 (T104) interacts with GTP. S128 serves as a coordination point for S-adenosyl-L-methionine. Residue K165 participates in GTP binding. Position 199 (M199) interacts with S-adenosyl-L-methionine. Residues C262 and C265 each contribute to the [4Fe-4S] cluster site. Residue 267–269 (RLR) coordinates GTP. C279 contacts [4Fe-4S] cluster.

The protein belongs to the radical SAM superfamily. MoaA family. As to quaternary structure, monomer and homodimer. [4Fe-4S] cluster serves as cofactor.

The catalysed reaction is GTP + AH2 + S-adenosyl-L-methionine = (8S)-3',8-cyclo-7,8-dihydroguanosine 5'-triphosphate + 5'-deoxyadenosine + L-methionine + A + H(+). It participates in cofactor biosynthesis; molybdopterin biosynthesis. Its function is as follows. Catalyzes the cyclization of GTP to (8S)-3',8-cyclo-7,8-dihydroguanosine 5'-triphosphate. The protein is GTP 3',8-cyclase of Vibrio atlanticus (strain LGP32) (Vibrio splendidus (strain Mel32)).